The sequence spans 512 residues: Probable multidrug resistance protein EmrY (512 aa).

The Cytoplasmic portion of the chain corresponds to 1-8 (MAITKSTP). The helical transmembrane segment at 9-29 (APLTGGTLWCVTIALSLATFM) threads the bilayer. A topological domain (periplasmic) is located at residue Gln30. The chain crosses the membrane as a helical span at residues 31–51 (MLDSTISNVAIPTISGFLGAS). The Cytoplasmic portion of the chain corresponds to 52–53 (TD). Residues 54–74 (EGTWVITSFGVANAIAIPVTG) traverse the membrane as a helical segment. Over 75–84 (RLAQRIGELR) the chain is Periplasmic. The next 2 helical transmembrane spans lie at 85–105 (LFLL…LSTN) and 106–126 (LDVL…LIPL). The Periplasmic segment spans residues 127-141 (SQSLLLRNYPPEKRT). The chain crosses the membrane as a helical span at residues 142–162 (FALALWSMTVIIAPICGPILG). At 163–172 (GYICDNFSWG) the chain is on the cytoplasmic side. Residues 173–193 (WIFLINVPMGIIVLTLCLTLL) form a helical membrane-spanning segment. Over 194-204 (KGRETETSPVK) the chain is Periplasmic. A helical membrane pass occupies residues 205–225 (MNLPGLTLLVLGVGGLQIMLD). Residues 226-234 (KGRDLDWFN) are Cytoplasmic-facing. A helical transmembrane segment spans residues 235-255 (SSTIIILTVVSVISLISLVIW). The Periplasmic portion of the chain corresponds to 256–273 (ESTSENPILDLSLFKSRN). The chain crosses the membrane as a helical span at residues 274–294 (FTIGIVSITCAYLFYSGAIVL). Topologically, residues 295–307 (MPQLLQETMGYNA) are cytoplasmic. Residues 308 to 328 (IWAGLAYAPIGIMPLLISPLI) traverse the membrane as a helical segment. Topologically, residues 329–338 (GRYGNKIDMR) are periplasmic. The helical transmembrane segment at 339-359 (LLVTFSFLMYAVCYYWRSVTF) threads the bilayer. At 360 to 364 (MPTID) the chain is on the cytoplasmic side. A helical transmembrane segment spans residues 365-385 (FTGIILPQFFQGFAVACFFLP). At 386 to 486 (LTTISFSGLP…LSISANEIFR (101 aa)) the chain is on the periplasmic side. A helical membrane pass occupies residues 487-507 (MAAIAFILLTVLVWFAKPPFT). Over 508 to 512 (AKGVG) the chain is Cytoplasmic.

Belongs to the major facilitator superfamily. EmrB family. As to quaternary structure, part of the tripartite efflux system EmrYK-TolC, which is composed of an inner membrane transporter, EmrY, a membrane fusion protein, EmrK, and an outer membrane component, TolC. The complex forms a large protein conduit and can translocate molecules across both the inner and outer membranes.

It is found in the cell inner membrane. In terms of biological role, part of the tripartite efflux system EmrYK-TolC, which confers resistance to various drugs. The sequence is that of Probable multidrug resistance protein EmrY (emrY) from Escherichia coli (strain K12).